The primary structure comprises 590 residues: MKTVRFNKQALAILAACFIFLLCVVCYFSASSESHNAVVVGERARGHIAVRDVENRHLAEEKHAVIHAKTVGKIERVVSQEKVEILRPARVESKPPGEKTSTEPEETGVGKAPIQTSEGLEKLIGKIHYENKDEENDLRRQKVKEMMIHAWEGYKNYSWGANELRPMSKKPNSQNIFGGSQMPATIVDAADTLFIMDLKDKYKEARDYIENNFSMAKSTSTLSVFETTIRFLGGLLSLYALTQESFYIEKAREVGEALLPAFNTPSGIPKSNLDVASKHASNYGWANGGQSILSEIGSLHLEFLYLSRISNAPIFEKKVKKVRDALEKAEKPNGLYSNYINPDTGKFTGSHMSLGALGDSFYEYLIKSYVQSNYTDTQAKNMYWDVSDAIQKHMIKVSKQSNLTYTVELNNGQAQHKMGHLACFVPGMFALQAINEDTEEEKLRIMTLAEELAKTCHESYIRSETHIGPEMFYFNERDEATSKHSENGYIQRPEVIEGWFYLWRLTGKTMYRDWVWDAVQAIEKYCRVDSGFTGLQNVYNPKAGREDVMQSFFLAEFLKYAYLTFADESLISLDKWVFNTEAHPVPVLTN.

The Cytoplasmic segment spans residues 1 to 9 (MKTVRFNKQ). The helical; Signal-anchor for type II membrane protein transmembrane segment at 10–30 (ALAILAACFIFLLCVVCYFSA) threads the bilayer. Topologically, residues 31-590 (SSESHNAVVV…EAHPVPVLTN (560 aa)) are lumenal. The span at 88 to 102 (PARVESKPPGEKTST) shows a compositional bias: basic and acidic residues. Residues 88-112 (PARVESKPPGEKTSTEPEETGVGKA) form a disordered region. N-linked (GlcNAc...) asparagine glycans are attached at residues N156, N212, N373, and N402. Residues C423 and C456 are joined by a disulfide bond. E470 (proton donor) is an active-site residue. T580 is a binding site for Ca(2+).

This sequence belongs to the glycosyl hydrolase 47 family. Requires Ca(2+) as cofactor.

The protein resides in the membrane. The catalysed reaction is N(4)-(alpha-D-Man-(1-&gt;2)-alpha-D-Man-(1-&gt;2)-alpha-D-Man-(1-&gt;3)-[alpha-D-Man-(1-&gt;2)-alpha-D-Man-(1-&gt;3)-[alpha-D-Man-(1-&gt;2)-alpha-D-Man-(1-&gt;6)]-alpha-D-Man-(1-&gt;6)]-beta-D-Man-(1-&gt;4)-beta-D-GlcNAc-(1-&gt;4)-beta-D-GlcNAc)-L-asparaginyl-[protein] (N-glucan mannose isomer 9A1,2,3B1,2,3) + 4 H2O = N(4)-(alpha-D-Man-(1-&gt;3)-[alpha-D-Man-(1-&gt;3)-[alpha-D-Man-(1-&gt;6)]-alpha-D-Man-(1-&gt;6)]-beta-D-Man-(1-&gt;4)-beta-D-GlcNAc-(1-&gt;4)-beta-D-GlcNAc)-L-asparaginyl-[protein] (N-glucan mannose isomer 5A1,2) + 4 beta-D-mannose. It carries out the reaction N(4)-(alpha-D-Man-(1-&gt;2)-alpha-D-Man-(1-&gt;2)-alpha-D-Man-(1-&gt;3)-[alpha-D-Man-(1-&gt;3)-[alpha-D-Man-(1-&gt;2)-alpha-D-Man-(1-&gt;6)]-alpha-D-Man-(1-&gt;6)]-beta-D-Man-(1-&gt;4)-beta-D-GlcNAc-(1-&gt;4)-beta-D-GlcNAc)-L-asparaginyl-[protein] (N-glucan mannose isomer 8A1,2,3B1,3) + 3 H2O = N(4)-(alpha-D-Man-(1-&gt;3)-[alpha-D-Man-(1-&gt;3)-[alpha-D-Man-(1-&gt;6)]-alpha-D-Man-(1-&gt;6)]-beta-D-Man-(1-&gt;4)-beta-D-GlcNAc-(1-&gt;4)-beta-D-GlcNAc)-L-asparaginyl-[protein] (N-glucan mannose isomer 5A1,2) + 3 beta-D-mannose. It functions in the pathway protein modification; protein glycosylation. Functionally, involved in the maturation of Asn-linked oligosaccharides. Progressively trim alpha-1,2-linked mannose residues from Man(9)GlcNAc(2) to produce Man(5)GlcNAc(2). The sequence is that of Mannosyl-oligosaccharide 1,2-alpha-mannosidase mans-2 from Caenorhabditis elegans.